Consider the following 377-residue polypeptide: Acetylornithine aminotransferase (377 aa).

Residues 94 to 95 and phenylalanine 121 each bind pyridoxal 5'-phosphate; that span reads GT. Arginine 124 is a binding site for N(2)-acetyl-L-ornithine. 206–209 contacts pyridoxal 5'-phosphate; the sequence is DEIQ. At lysine 235 the chain carries N6-(pyridoxal phosphate)lysine. Serine 263 lines the N(2)-acetyl-L-ornithine pocket. Pyridoxal 5'-phosphate is bound at residue threonine 264.

This sequence belongs to the class-III pyridoxal-phosphate-dependent aminotransferase family. ArgD subfamily. Homodimer. Pyridoxal 5'-phosphate is required as a cofactor.

Its subcellular location is the cytoplasm. The catalysed reaction is N(2)-acetyl-L-ornithine + 2-oxoglutarate = N-acetyl-L-glutamate 5-semialdehyde + L-glutamate. It functions in the pathway amino-acid biosynthesis; L-arginine biosynthesis; N(2)-acetyl-L-ornithine from L-glutamate: step 4/4. The chain is Acetylornithine aminotransferase from Lactococcus lactis subsp. lactis (strain IL1403) (Streptococcus lactis).